An 871-amino-acid polypeptide reads, in one-letter code: MEGAGPRGAGPARRRGAGGPPSPLLPSLLLLLLLWMLPDTVAPQELNPRGRNVCRAPGSQVPTCCAGWRQQGDECGIAVCEGNSTCSENEVCVRPGECRCRHGYFGANCDTKCPRQFWGPDCKELCSCHPHGQCEDVTGQCTCHARRWGARCEHACQCQHGTCHPRSGACRCEPGWWGAQCASACYCSATSRCDPQTGACLCHAGWWGRSCNNQCACNSSPCEQQSGRCQCRERTFGARCDRYCQCFRGRCHPVDGTCACEPGYRGKYCREPCPAGFYGLGCRRRCGQCKGQQPCTVAEGRCLTCEPGWNGTKCDQPCATGFYGEGCSHRCPPCRDGHACNHVTGKCTRCNAGWIGDRCETKCSNGTYGEDCAFVCADCGSGHCDFQSGRCLCSPGVHGPHCNVTCPPGLHGADCAQACSCHEDTCDPVTGACHLETNQRKGVMGAGALLVLLVCLLLSLLGCCCACRGKDPTRRPRPRRELSLGRKKAPHRLCGRFSRISMKLPRIPLRRQKLPKVVVAHHDLDNTLNCSFLEPPSGLEQPSPSWSSRASFSSFDTTDEGPVYCVPHEEAPAESRDPEVPTVPAEAPAPSPVPLTTPASAEEAIPLPASSDSERSASSVEGPGGALYARVARREARPARARGEIGGLSLSPSPERRKPPPPDPATKPKVSWIHGKHSAAAAGRAPSPPPPGSEAAPSPSKRKRTPSDKSAHTVEHGSPRTRDPTPRPPGLPEEATALAAPSPPRARARGRGPGLLEPTDAGGPPRSAPEAASMLAAELRGKTRSLGRAEVALGAQGPREKPAPPQKAKRSVPPASPARAPPATETPGPEKAATDLPAPETPRKKTPIQKPPRKKSREAAGELGRAGAPTL.

A disordered region spans residues 1 to 20; the sequence is MEGAGPRGAGPARRRGAGGP. Positions 1–43 are cleaved as a signal peptide; sequence MEGAGPRGAGPARRRGAGGPPSPLLPSLLLLLLLWMLPDTVAP. Residues 44-441 lie on the Extracellular side of the membrane; the sequence is QELNPRGRNV…ACHLETNQRK (398 aa). 6 EGF-like domains span residues 71–110, 122–153, 148–182, 183–212, 213–241, and 236–270; these read QGDE…ANCD, CKEL…ARCE, WGAR…AQCA, SACY…RSCN, NQCA…ARCD, and FGAR…KYCR. Cystine bridges form between cysteine 75–cysteine 86, cysteine 80–cysteine 98, cysteine 100–cysteine 109, cysteine 126–cysteine 134, cysteine 128–cysteine 141, cysteine 143–cysteine 152, cysteine 156–cysteine 163, cysteine 158–cysteine 170, cysteine 172–cysteine 181, cysteine 185–cysteine 193, cysteine 187–cysteine 200, cysteine 202–cysteine 211, cysteine 215–cysteine 222, cysteine 217–cysteine 229, cysteine 231–cysteine 240, cysteine 244–cysteine 251, cysteine 246–cysteine 258, and cysteine 260–cysteine 269. Asparagine 83 is a glycosylation site (N-linked (GlcNAc...) asparagine). Residues asparagine 310 and asparagine 365 are each glycosylated (N-linked (GlcNAc...) asparagine). Residues 372–403 form the EGF-like 7 domain; that stretch reads CAFVCADCGSGHCDFQSGRCLCSPGVHGPHCN. 3 disulfides stabilise this stretch: cysteine 376/cysteine 384, cysteine 379/cysteine 391, and cysteine 393/cysteine 402. Asparagine 403 carries an N-linked (GlcNAc...) asparagine glycan. A helical membrane pass occupies residues 442–462; it reads GVMGAGALLVLLVCLLLSLLG. At 463 to 871 the chain is on the cytoplasmic side; it reads CCCACRGKDP…ELGRAGAPTL (409 aa). At serine 551 the chain carries Phosphoserine. Over residues 570–579 the composition is skewed to basic and acidic residues; the sequence is EAPAESRDPE. The segment at 570-871 is disordered; it reads EAPAESRDPE…ELGRAGAPTL (302 aa). Serine 613 bears the Phosphoserine mark. Residue tyrosine 628 is modified to Phosphotyrosine. The span at 632-643 shows a compositional bias: basic and acidic residues; that stretch reads ARREARPARARG. A phosphoserine mark is found at serine 651, serine 653, serine 710, serine 718, and serine 742. Positions 705-725 are enriched in basic and acidic residues; sequence TPSDKSAHTVEHGSPRTRDPT. The segment covering 821-831 has biased composition (low complexity); it reads PPATETPGPEK. The span at 844–856 shows a compositional bias: basic residues; sequence KKTPIQKPPRKKS. Residues 861–871 show a composition bias toward low complexity; it reads GELGRAGAPTL.

As to quaternary structure, homophilic and heterophilic interaction via its extracellular domain. Interacts with SCARF1. The heterophilic interaction with SCARF1, which is stronger than the homophilic interaction with itself, is suppressed by the presence of SCARF1 ligand such as Ac-LDL. As to expression, predominantly expressed in endothelial cells. Expressed in heart, placenta, lung, kidney, spleen, small intestine and ovary.

It is found in the membrane. In terms of biological role, probable adhesion protein, which mediates homophilic and heterophilic interactions. In contrast to SCARF1, it poorly mediates the binding and degradation of acetylated low density lipoprotein (Ac-LDL). In Homo sapiens (Human), this protein is Scavenger receptor class F member 2 (SCARF2).